We begin with the raw amino-acid sequence, 455 residues long: Argininosuccinate lyase (455 aa).

It belongs to the lyase 1 family. Argininosuccinate lyase subfamily.

The protein resides in the cytoplasm. The enzyme catalyses 2-(N(omega)-L-arginino)succinate = fumarate + L-arginine. It functions in the pathway amino-acid biosynthesis; L-arginine biosynthesis; L-arginine from L-ornithine and carbamoyl phosphate: step 3/3. This chain is Argininosuccinate lyase, found in Roseiflexus castenholzii (strain DSM 13941 / HLO8).